Reading from the N-terminus, the 152-residue chain is UPF0179 protein Mlab_1307 (152 aa).

Belongs to the UPF0179 family.

The sequence is that of UPF0179 protein Mlab_1307 from Methanocorpusculum labreanum (strain ATCC 43576 / DSM 4855 / Z).